The sequence spans 362 residues: 3-dehydroquinate synthase (362 aa).

NAD(+)-binding positions include 71 to 76 (DGEQYK), 105 to 109 (GVIGD), 129 to 130 (TT), Lys142, Lys151, and 169 to 172 (CLST). Residues Glu184, His247, and His264 each contribute to the Zn(2+) site.

It belongs to the sugar phosphate cyclases superfamily. Dehydroquinate synthase family. Requires Co(2+) as cofactor. It depends on Zn(2+) as a cofactor. NAD(+) is required as a cofactor.

Its subcellular location is the cytoplasm. It catalyses the reaction 7-phospho-2-dehydro-3-deoxy-D-arabino-heptonate = 3-dehydroquinate + phosphate. Its pathway is metabolic intermediate biosynthesis; chorismate biosynthesis; chorismate from D-erythrose 4-phosphate and phosphoenolpyruvate: step 2/7. Functionally, catalyzes the conversion of 3-deoxy-D-arabino-heptulosonate 7-phosphate (DAHP) to dehydroquinate (DHQ). This chain is 3-dehydroquinate synthase, found in Vibrio atlanticus (strain LGP32) (Vibrio splendidus (strain Mel32)).